The sequence spans 158 residues: Transcriptional regulator MraZ (158 aa).

SpoVT-AbrB domains follow at residues asparagine 7–valine 54 and valine 84–arginine 127.

The protein belongs to the MraZ family. In terms of assembly, forms oligomers.

Its subcellular location is the cytoplasm. It localises to the nucleoid. The protein is Transcriptional regulator MraZ of Bacteroides fragilis (strain ATCC 25285 / DSM 2151 / CCUG 4856 / JCM 11019 / LMG 10263 / NCTC 9343 / Onslow / VPI 2553 / EN-2).